Consider the following 27-residue polypeptide: Allergen C-C (27 aa).

The protein belongs to the protease inhibitor I6 (cereal trypsin/alpha-amylase inhibitor) family.

The protein localises to the secreted. This chain is Allergen C-C, found in Triticum aestivum (Wheat).